The chain runs to 176 residues: Ribosome maturation factor RimM (176 aa).

In terms of domain architecture, PRC barrel spans 97–176; sequence EDEFYWRDLI…QILVDWDPDF (80 aa).

The protein belongs to the RimM family. In terms of assembly, binds ribosomal protein uS19.

It localises to the cytoplasm. An accessory protein needed during the final step in the assembly of 30S ribosomal subunit, possibly for assembly of the head region. Essential for efficient processing of 16S rRNA. May be needed both before and after RbfA during the maturation of 16S rRNA. It has affinity for free ribosomal 30S subunits but not for 70S ribosomes. This chain is Ribosome maturation factor RimM, found in Shewanella oneidensis (strain ATCC 700550 / JCM 31522 / CIP 106686 / LMG 19005 / NCIMB 14063 / MR-1).